Reading from the N-terminus, the 431-residue chain is Enolase (431 aa).

Position 167 (glutamine 167) interacts with (2R)-2-phosphoglycerate. Glutamate 209 (proton donor) is an active-site residue. Mg(2+) contacts are provided by aspartate 246, glutamate 289, and aspartate 316. (2R)-2-phosphoglycerate contacts are provided by lysine 341, arginine 370, serine 371, and lysine 392. Lysine 341 (proton acceptor) is an active-site residue.

It belongs to the enolase family. Component of the RNA degradosome, a multiprotein complex involved in RNA processing and mRNA degradation. Mg(2+) is required as a cofactor.

The protein localises to the cytoplasm. Its subcellular location is the secreted. It localises to the cell surface. It catalyses the reaction (2R)-2-phosphoglycerate = phosphoenolpyruvate + H2O. The protein operates within carbohydrate degradation; glycolysis; pyruvate from D-glyceraldehyde 3-phosphate: step 4/5. Functionally, catalyzes the reversible conversion of 2-phosphoglycerate (2-PG) into phosphoenolpyruvate (PEP). It is essential for the degradation of carbohydrates via glycolysis. This chain is Enolase, found in Shewanella baltica (strain OS223).